The sequence spans 310 residues: Transcription factor UNE12 (310 aa).

Disordered regions lie at residues 124–156 (HGQPMQQPPPSAPHQPTSIRPRVRARRGQATDP) and 229–253 (SSSVEDETGEGGRTPQPAWEKWSND). In terms of domain architecture, bHLH spans 152 to 201 (QATDPHSIAERLRRERIAERIRALQELVPTVNKTDRAAMIDEIVDYVKFL).

As to quaternary structure, homodimer. In terms of tissue distribution, expressed constitutively in roots, leaves, stems, and flowers.

The protein localises to the nucleus. Required for ovule fertilization. The protein is Transcription factor UNE12 (UNE12) of Arabidopsis thaliana (Mouse-ear cress).